The chain runs to 459 residues: Zeatin O-glucosyltransferase (459 aa).

The Proton acceptor role is filled by H26. H26 provides a ligand contact to an anthocyanidin. The Charge relay role is filled by D125. S148, A335, Q337, H352, W355, N356, S357, E360, D376, and Q377 together coordinate UDP-alpha-D-glucose.

The protein belongs to the UDP-glycosyltransferase family.

The enzyme catalyses trans-zeatin + UDP-alpha-D-glucose = O-beta-D-glucosyl-trans-zeatin + UDP + H(+). Its function is as follows. May regulate active versus storage forms of cytokinins, and could have an impact on seed growth. Can also use UDP-xylose to catalyze the formation of O-xylosylzeatin but at much lower affinity. The polypeptide is Zeatin O-glucosyltransferase (Phaseolus lunatus (Lima bean)).